Reading from the N-terminus, the 205-residue chain is Probable GTP-binding protein EngB (205 aa).

Positions 8–195 (RDAEVVLIGR…NEAVRHHLHE (188 aa)) constitute an EngB-type G domain. GTP contacts are provided by residues 16-23 (GRSNVGKS), 41-45 (GVTRS), 60-63 (DLPG), 140-143 (NKMD), and 175-177 (ISA). Residues Ser-23 and Thr-43 each coordinate Mg(2+).

This sequence belongs to the TRAFAC class TrmE-Era-EngA-EngB-Septin-like GTPase superfamily. EngB GTPase family. It depends on Mg(2+) as a cofactor.

Its function is as follows. Necessary for normal cell division and for the maintenance of normal septation. The protein is Probable GTP-binding protein EngB of Haloarcula marismortui (strain ATCC 43049 / DSM 3752 / JCM 8966 / VKM B-1809) (Halobacterium marismortui).